A 377-amino-acid chain; its full sequence is Succinyl-diaminopimelate desuccinylase (377 aa).

Histidine 66 provides a ligand contact to Zn(2+). Aspartate 68 is a catalytic residue. Residue aspartate 99 coordinates Zn(2+). Residue glutamate 133 is the Proton acceptor of the active site. Zn(2+)-binding residues include glutamate 134, glutamate 163, and histidine 349.

It belongs to the peptidase M20A family. DapE subfamily. In terms of assembly, homodimer. Zn(2+) serves as cofactor. The cofactor is Co(2+).

It carries out the reaction N-succinyl-(2S,6S)-2,6-diaminopimelate + H2O = (2S,6S)-2,6-diaminopimelate + succinate. Its pathway is amino-acid biosynthesis; L-lysine biosynthesis via DAP pathway; LL-2,6-diaminopimelate from (S)-tetrahydrodipicolinate (succinylase route): step 3/3. In terms of biological role, catalyzes the hydrolysis of N-succinyl-L,L-diaminopimelic acid (SDAP), forming succinate and LL-2,6-diaminopimelate (DAP), an intermediate involved in the bacterial biosynthesis of lysine and meso-diaminopimelic acid, an essential component of bacterial cell walls. The chain is Succinyl-diaminopimelate desuccinylase from Legionella pneumophila (strain Lens).